A 317-amino-acid polypeptide reads, in one-letter code: Ribosomal RNA small subunit methyltransferase A (317 aa).

S-adenosyl-L-methionine-binding residues include N37, V39, G64, E85, D115, and N134. The tract at residues 293–317 (GGSDEATSTGRDARAPDISGHASAS) is disordered.

It belongs to the class I-like SAM-binding methyltransferase superfamily. rRNA adenine N(6)-methyltransferase family. RsmA subfamily.

It is found in the cytoplasm. The enzyme catalyses adenosine(1518)/adenosine(1519) in 16S rRNA + 4 S-adenosyl-L-methionine = N(6)-dimethyladenosine(1518)/N(6)-dimethyladenosine(1519) in 16S rRNA + 4 S-adenosyl-L-homocysteine + 4 H(+). In terms of biological role, specifically dimethylates two adjacent adenosines (A1518 and A1519) in the loop of a conserved hairpin near the 3'-end of 16S rRNA in the 30S particle. May play a critical role in biogenesis of 30S subunits. In Mycobacterium bovis (strain BCG / Tokyo 172 / ATCC 35737 / TMC 1019), this protein is Ribosomal RNA small subunit methyltransferase A.